Consider the following 390-residue polypeptide: Manganese peroxidase 2 (390 aa).

Residues methionine 1–serine 23 form the signal peptide. 5 disulfide bridges follow: cysteine 27–cysteine 39, cysteine 38–cysteine 313, cysteine 57–cysteine 141, cysteine 277–cysteine 343, and cysteine 365–cysteine 372. Mn(2+)-binding residues include glutamate 59 and glutamate 63. Histidine 70 functions as the Proton acceptor in the catalytic mechanism. Ca(2+) is bound by residues aspartate 71, glycine 86, aspartate 88, and serine 90. The N-linked (GlcNAc...) asparagine glycan is linked to asparagine 155. Histidine 197 is a binding site for heme b. Serine 198 is a binding site for Ca(2+). Residue aspartate 203 participates in Mn(2+) binding. Ca(2+)-binding residues include aspartate 215, threonine 217, and aspartate 222. The N-linked (GlcNAc...) asparagine glycan is linked to asparagine 241.

It belongs to the peroxidase family. Ligninase subfamily. It depends on heme b as a cofactor. Requires Ca(2+) as cofactor.

It is found in the secreted. The catalysed reaction is 2 Mn(2+) + H2O2 + 2 H(+) = 2 Mn(3+) + 2 H2O. Its function is as follows. Catalyzes the oxidation of Mn(2+) to Mn(3+). The latter, acting as a diffusible redox mediator, is capable of oxidizing a variety of lignin compounds. The chain is Manganese peroxidase 2 (mnp2) from Phlebia radiata (White-rot fungus).